The following is an 82-amino-acid chain: MSETSSAPVRRPFHRRRKTCPFSGANAPRIDYKDVRLLQRYISERGKIVPSRITAVSQKKQRELAQAIKRARFLGLLPYVVA.

The segment at 1–20 is disordered; the sequence is MSETSSAPVRRPFHRRRKTC.

The protein belongs to the bacterial ribosomal protein bS18 family. In terms of assembly, part of the 30S ribosomal subunit. Forms a tight heterodimer with protein bS6.

Its function is as follows. Binds as a heterodimer with protein bS6 to the central domain of the 16S rRNA, where it helps stabilize the platform of the 30S subunit. The sequence is that of Small ribosomal subunit protein bS18 from Rhizobium johnstonii (strain DSM 114642 / LMG 32736 / 3841) (Rhizobium leguminosarum bv. viciae).